The following is a 39-amino-acid chain: Conotoxin ArMSGL-013 (39 aa).

Positions 1-5 (RRSLT) are excised as a propeptide. 3 disulfides stabilise this stretch: C12–C24, C16–C33, and C23–C37. W38 carries the post-translational modification Tryptophan amide.

The protein belongs to the conotoxin O3 superfamily. Expressed by the venom duct.

It localises to the secreted. The chain is Conotoxin ArMSGL-013 from Conus arenatus (Sand-dusted cone).